The following is a 628-amino-acid chain: MMDGFAQDWPTLTHTDNGLAMDQLGGDLPLDVGFEPQTRARSNTWPCPRPENFVEPTDELDSTKASNQQLAPGDSQQAIQNANAAKKNSSRRNAWGNLSYADLITHAIGSATDKRLTLSQIYEWMVQNVPYFKDKGDSNSSAGWKNSIRHNLSLHNRFMRVQNEGTGKSSWWMLNPEAKPGKSVRRRAASMETSRYEKRRGRAKKRVEALRQAGVVGLNDATPSPSSSVSEGLDHFPESPLHSGGGFQLSPDFRQRASSNASSCGRLSPIRAQDLEPDWGFPVDYQNTTMTQAHAQALEELTCSVADELTLCTQQQQQGFSAASGLPSQPPPPPYQPPQHQQAQQQQSPYALNGPAPGYNTLQPQSQCLLHRSLNCSCMHNARDGLSPNSVTTTMSPAYPNSEPSSDSLNTYSNVVLDGPADTAALMVQQQQQQQQQQQQQQQQLSASLEGQCLEVLNNEAQPIDEFNLENFPVGNLECNVEELLQQEMSYGGLLDINIPLATVNTNLVNSSSGPLSISNISNISNISNLSNLSNISNISSNSGSSLNLNQLQAQLQQQQQQQQAQLQQQAQQQQQPHQQHQQQLLLNNNNNSSSSLELATQTASSNLNARVQYSQPSVVTSPPSWVH.

Disordered regions lie at residues 39–77 (RARS…DSQQ), 182–205 (KSVR…RAKK), 217–269 (GLND…RLSP), 316–359 (QQQG…APGY), and 389–415 (NSVT…YSNV). Threonine 44 carries the phosphothreonine; by PKB/AKT1 modification. Residues 63-77 (TKASNQQLAPGDSQQ) are compositionally biased toward polar residues. Phosphoserine is present on serine 75. Positions 95-201 (WGNLSYADLI…ETSRYEKRRG (107 aa)) form a DNA-binding region, fork-head. Serine 190 carries the phosphoserine; by PKB/AKT1 modification. 2 stretches are compositionally biased toward polar residues: residues 221–230 (ATPSPSSSVS) and 256–265 (RASSNASSCG). Serine 259 is subject to Phosphoserine; by PKB/AKT1. Phosphoserine is present on residues serine 262, serine 263, and serine 268. Residues 328-337 (SQPPPPPYQP) show a composition bias toward pro residues. Residues 338 to 351 (PQHQQAQQQQSPYA) show a composition bias toward low complexity. The segment covering 402–414 (SEPSSDSLNTYSN) has biased composition (polar residues).

As to quaternary structure, interacts with melt.

It is found in the cytoplasm. The protein localises to the nucleus. Transcription factor involved in the regulation of the insulin signaling pathway. Consistently activates both the downstream target Thor\d4EBP and the feedback control target InR. Involved in negative regulation of the cell cycle, modulating cell growth and proliferation. In response to cellular stresses, such as nutrient deprivation or increased levels of reactive oxygen species, foxo is activated and inhibits growth through the action of target genes such as Thor. Foxo activated in the adult fat body can regulate lifespan in adults; an insulin peptide itself may function as one secondary messenger of insulin-regulated aging. Also regulates Lip4, homolog of human acid lipases, thereby acting as a key modulator of lipid metabolism by insulin signaling and integrates insulin responses to glucose and lipid homeostasis. In Drosophila yakuba (Fruit fly), this protein is Forkhead box protein O.